We begin with the raw amino-acid sequence, 513 residues long: Activin receptor type-2A (513 aa).

The N-terminal stretch at 1–19 (MGAAAKLAFAVFLISCSSG) is a signal peptide. Over 20-135 (AILGRSETQE…TSNPVTPKPP (116 aa)) the chain is Extracellular. 5 cysteine pairs are disulfide-bonded: cysteine 30-cysteine 60, cysteine 50-cysteine 78, cysteine 85-cysteine 104, cysteine 91-cysteine 103, and cysteine 105-cysteine 110. N-linked (GlcNAc...) asparagine glycosylation is found at asparagine 43 and asparagine 66. A helical transmembrane segment spans residues 136–161 (YYNILLYSLVPLMLIAGIVICAFWVY). At 162–513 (RHHKMAYPPV…VDFPPKESSL (352 aa)) the chain is on the cytoplasmic side. The Protein kinase domain maps to 192–485 (LQLLEVKARG…GERITQMQRL (294 aa)). Residues 198–206 (KARGRFGCV) and lysine 219 contribute to the ATP site. Aspartate 322 functions as the Proton acceptor in the catalytic mechanism.

It belongs to the protein kinase superfamily. TKL Ser/Thr protein kinase family. TGFB receptor subfamily. In terms of assembly, part of a complex consisting of MAGI2/ARIP1, ACVR2A, ACVR1B and SMAD3. Interacts with MAGI2/ARIP1. Interacts with type I receptor ACVR1. Interacts with BMP7. Interacts with TSC22D1/TSC-22. Interacts with activin A/INHBA. It depends on Mg(2+) as a cofactor. Requires Mn(2+) as cofactor.

The protein resides in the cell membrane. The catalysed reaction is L-threonyl-[receptor-protein] + ATP = O-phospho-L-threonyl-[receptor-protein] + ADP + H(+). It carries out the reaction L-seryl-[receptor-protein] + ATP = O-phospho-L-seryl-[receptor-protein] + ADP + H(+). Its function is as follows. On ligand binding, forms a receptor complex consisting of two type II and two type I transmembrane serine/threonine kinases. Type II receptors phosphorylate and activate type I receptors which autophosphorylate, then bind and activate SMAD transcriptional regulators. Receptor for activin A, activin B and inhibin A. Mediates induction of adipogenesis by GDF6. This Homo sapiens (Human) protein is Activin receptor type-2A.